The chain runs to 319 residues: MNPNYLDFEQPIADLEAKIQELRKASTGPAVNVETEVRALRDKLRVRTAQIFRDLSAWQVSQLARHPQRPYTLDYINTICDEFHELAGDRAYADDKAIVGGLGRIDGRPVVIIGHQKGRDTKTKVARNFGMPRPEGYRKALRLMKLAERFRLPLLTFIDTPGAYPGIGAEERGQSEAIARNLLEMAELKIPVICTVIGEGGSGGALAIGVGDRTLMLEYGTYSVISPEGCASILWKDAAKAKDAAEQLGLTAKRLKGLGLVDKVIREPTGGAHRNPEQMGKRLKAVLLNELDALEKIPVDTLLQQRYERLRSYGAYEGH.

The CoA carboxyltransferase C-terminal domain maps to 32 to 293 (NVETEVRALR…KAVLLNELDA (262 aa)).

Belongs to the AccA family. Acetyl-CoA carboxylase is a heterohexamer composed of biotin carboxyl carrier protein (AccB), biotin carboxylase (AccC) and two subunits each of ACCase subunit alpha (AccA) and ACCase subunit beta (AccD).

It is found in the cytoplasm. The enzyme catalyses N(6)-carboxybiotinyl-L-lysyl-[protein] + acetyl-CoA = N(6)-biotinyl-L-lysyl-[protein] + malonyl-CoA. It functions in the pathway lipid metabolism; malonyl-CoA biosynthesis; malonyl-CoA from acetyl-CoA: step 1/1. In terms of biological role, component of the acetyl coenzyme A carboxylase (ACC) complex. First, biotin carboxylase catalyzes the carboxylation of biotin on its carrier protein (BCCP) and then the CO(2) group is transferred by the carboxyltransferase to acetyl-CoA to form malonyl-CoA. The protein is Acetyl-coenzyme A carboxylase carboxyl transferase subunit alpha of Xanthomonas axonopodis pv. citri (strain 306).